The primary structure comprises 351 residues: Small ribosomal subunit biogenesis GTPase RsgA (351 aa).

Over residues 1–12 (MAKHKLSKGQQR) the composition is skewed to basic residues. Positions 1 to 37 (MAKHKLSKGQQRRVRENHQRRLKKQDNKPEMDDNQLG) are disordered. The span at 13-31 (RVRENHQRRLKKQDNKPEM) shows a compositional bias: basic and acidic residues. The region spanning 112-274 (YYDGIKPIAA…VIDSPGVREF (163 aa)) is the CP-type G domain. GTP contacts are provided by residues 160–163 (NKID) and 214–222 (GQSGVGKSS). 4 residues coordinate Zn(2+): Cys298, Cys303, His305, and Cys311.

It belongs to the TRAFAC class YlqF/YawG GTPase family. RsgA subfamily. In terms of assembly, monomer. Associates with 30S ribosomal subunit, binds 16S rRNA. Zn(2+) is required as a cofactor.

The protein resides in the cytoplasm. Functionally, one of several proteins that assist in the late maturation steps of the functional core of the 30S ribosomal subunit. Helps release RbfA from mature subunits. May play a role in the assembly of ribosomal proteins into the subunit. Circularly permuted GTPase that catalyzes slow GTP hydrolysis, GTPase activity is stimulated by the 30S ribosomal subunit. The protein is Small ribosomal subunit biogenesis GTPase RsgA of Photorhabdus laumondii subsp. laumondii (strain DSM 15139 / CIP 105565 / TT01) (Photorhabdus luminescens subsp. laumondii).